Consider the following 401-residue polypeptide: Type 3 secretion system translocon protein SctE (401 aa).

A coiled-coil region spans residues 129-160 (IQRLHEQNMKKIEENQEKIKETEENAKQVKKS). The next 2 membrane-spanning stretches (helical) occupy residues 166-186 (IFGW…VASG) and 225-245 (LGPI…VMTF). A coiled-coil region spans residues 345-379 (LALNKADMAALQSIIDRLKEELSHLSESHRQVMEL).

Belongs to the SctE/SipB/YopB family. In terms of assembly, the core secretion machinery of the T3SS is composed of approximately 20 different proteins, including cytoplasmic components, a base, an export apparatus and a needle. This subunit is involved in the formation of a pore, called the translocon, in host membrane. Interacts with YopD/SctB. Together with YopD/SctB, forms a multimeric integral membrane complex with a mass of between 500 and 700 kDa.

Its subcellular location is the secreted. The protein localises to the host membrane. Its function is as follows. Component of the type III secretion system (T3SS), also called injectisome, which is used to inject bacterial effector proteins into eukaryotic host cells. YopB/SctE and YopD/SctB are inserted into the host membrane where they form a pore and allow the translocation of effector proteins into the cytosol of target cells. Is an essential virulence determinant. Required for YopE translocation. Functionally, essential for the establishment of Yersinia infections in a mouse model system, but not for the targeting of effector Yops. May modulate the host's immune response at a distance from the site of infection. This Yersinia enterocolitica protein is Type 3 secretion system translocon protein SctE.